A 376-amino-acid chain; its full sequence is Chorismate synthase ARO2 (376 aa).

Ser2 bears the N-acetylserine mark. His17 is an active-site residue. Residues Ile39 to Asp61 are disordered. Active-site residues include His104 and Asp339.

This sequence belongs to the chorismate synthase family. In terms of assembly, homotetramer.

It catalyses the reaction 5-O-(1-carboxyvinyl)-3-phosphoshikimate = chorismate + phosphate. The enzyme catalyses FMNH2 + NADP(+) = FMN + NADPH + 2 H(+). Its pathway is metabolic intermediate biosynthesis; chorismate biosynthesis; chorismate from D-erythrose 4-phosphate and phosphoenolpyruvate: step 7/7. Bifunctional chorismate synthase and flavin reductase that catalyzes the conversion of 5-enolpyruvylshikimate 3-phosphate (EPSP) to form chorismate, which is the last common intermediate in the synthesis of the three aromatic amino acids phenylalanine, tyrosine and tryptophan. Also acts as a flavin reductase (FR) able to generate reduced flavin mononucleotide in the presence of NADPH. The chain is Chorismate synthase ARO2 from Saccharomyces cerevisiae (strain ATCC 204508 / S288c) (Baker's yeast).